Here is a 262-residue protein sequence, read N- to C-terminus: Polyamine aminopropyltransferase (262 aa).

One can recognise a PABS domain in the interval 1–249 (MWITQEITPY…DIHRAAFALP (249 aa)). Asn-29 is a binding site for S-methyl-5'-thioadenosine. Asp-83 serves as a coordination point for spermidine. Catalysis depends on Asp-155, which acts as the Proton acceptor.

It belongs to the spermidine/spermine synthase family. Homodimer or homotetramer.

It is found in the cytoplasm. It carries out the reaction S-adenosyl 3-(methylsulfanyl)propylamine + putrescine = S-methyl-5'-thioadenosine + spermidine + H(+). It functions in the pathway amine and polyamine biosynthesis; spermidine biosynthesis; spermidine from putrescine: step 1/1. Functionally, catalyzes the irreversible transfer of a propylamine group from the amino donor S-adenosylmethioninamine (decarboxy-AdoMet) to putrescine (1,4-diaminobutane) to yield spermidine. The chain is Polyamine aminopropyltransferase from Helicobacter pylori (strain G27).